A 354-amino-acid polypeptide reads, in one-letter code: UDP-galactose transporter homolog 1 (354 aa).

A run of 5 helical transmembrane segments spans residues 6-26 (GGSI…FLTW), 54-74 (LVIN…YSVV), 95-112 (FFKS…SSPL), 123-143 (LAYL…HFVL), and 148-168 (FPLY…IFTL). Residue Asn-202 is glycosylated (N-linked (GlcNAc...) asparagine). 4 helical membrane-spanning segments follow: residues 227–247 (YLMC…ALIF), 268–288 (MNIL…FIIL), 295–317 (ILIT…LFGH), and 321–340 (GLQW…EALV).

It belongs to the nucleotide-sugar transporter family. SLC35B subfamily.

It is found in the endoplasmic reticulum membrane. Its function is as follows. May be involved in specific transport of UDP-Gal from the cytosol to the Golgi lumen. Involved in the maintenance of optimal conditions for the folding of secretory pathway proteins in the endoplasmic reticulum. This is UDP-galactose transporter homolog 1 (HUT1) from Debaryomyces hansenii (strain ATCC 36239 / CBS 767 / BCRC 21394 / JCM 1990 / NBRC 0083 / IGC 2968) (Yeast).